The following is a 311-amino-acid chain: Porphobilinogen deaminase (311 aa).

The residue at position 241 (Cys-241) is an S-(dipyrrolylmethanemethyl)cysteine.

It belongs to the HMBS family. Monomer. It depends on dipyrromethane as a cofactor.

The enzyme catalyses 4 porphobilinogen + H2O = hydroxymethylbilane + 4 NH4(+). It functions in the pathway porphyrin-containing compound metabolism; protoporphyrin-IX biosynthesis; coproporphyrinogen-III from 5-aminolevulinate: step 2/4. Functionally, tetrapolymerization of the monopyrrole PBG into the hydroxymethylbilane pre-uroporphyrinogen in several discrete steps. This Bacillus pumilus (strain SAFR-032) protein is Porphobilinogen deaminase.